The chain runs to 337 residues: Molybdate import system permease protein MolB (337 aa).

The Cytoplasmic portion of the chain corresponds to 1–5 (MQPDS). Residues 6–25 (YPKILFGLTLLLVITAVISL) traverse the membrane as a helical segment. The Periplasmic portion of the chain corresponds to 26-51 (GIGRYSLSVPQIGQILWAKATALEID). The helical transmembrane segment at 52–87 (PVQQQVIFQVRLPRILTALCVGAGLALSGVVLQGIF) threads the bilayer. Topologically, residues 88-98 (RNPLVNPHIIG) are cytoplasmic. A helical membrane pass occupies residues 99-113 (VTSGSAFGGTLAIFF). Topologically, residues 114 to 116 (GFS) are periplasmic. The helical transmembrane segment at 117–140 (LYGLFTSTILFGFGTLALVFLFSF) threads the bilayer. At 141 to 146 (KFNQRS) the chain is on the cytoplasmic side. A helical membrane pass occupies residues 147 to 171 (LLMLILIGMILSGLFSALVSLLQYI). Over 172-193 (SDTEEKLPSIVFWLMGSFATSN) the chain is Periplasmic. Residues 194–214 (WEKLLFFFVPFLLCSSILLSL) form a helical membrane-spanning segment. Residues 215–234 (SWRLNLLSLDEKEAKALGVK) lie on the Cytoplasmic side of the membrane. A helical membrane pass occupies residues 235–257 (MAPLRWLVIFLSGSLVACQVAIS). The Periplasmic segment spans residues 258-264 (GSIGWVG). A helical membrane pass occupies residues 265–275 (LIIPHLSRMLV). The Cytoplasmic segment spans residues 276 to 278 (GAN). Residues 279-304 (HQSLLPCTMLVGATYMLLVDNVARSL) form a helical membrane-spanning segment. Residues 305-310 (SDAEIP) lie on the Periplasmic side of the membrane. A helical transmembrane segment spans residues 311–329 (ISILTALIGAPLFGVLVYK). Residues 330–337 (LKRGGMNE) are Cytoplasmic-facing.

The protein belongs to the binding-protein-dependent transport system permease family. FecCD subfamily. The complex is composed of two ATP-binding proteins (MolC), two transmembrane proteins (MolB) and a solute-binding protein (MolA).

Its subcellular location is the cell inner membrane. The MolBCA complex shows a decrease in affinity in the presence of increasing concentrations of substrate and nucleotide. Part of the ABC transporter complex MolBCA involved in molybdate import. Responsible for the translocation of the substrate across the membrane. Functions as a low-affinity molybdate transporter. The polypeptide is Molybdate import system permease protein MolB (Haemophilus influenzae (strain ATCC 51907 / DSM 11121 / KW20 / Rd)).